Here is a 283-residue protein sequence, read N- to C-terminus: ESX-1 secretion-associated protein EspG1 (283 aa).

Belongs to the EspG family. In terms of assembly, interacts specifically with ESX-1-dependent PE/PPE proteins. Interacts with PPE68.

It is found in the cytoplasm. Functionally, specific chaperone for cognate PE/PPE proteins. Plays an important role in preventing aggregation of PE/PPE dimers. The polypeptide is ESX-1 secretion-associated protein EspG1 (Mycobacterium tuberculosis (strain ATCC 25618 / H37Rv)).